Reading from the N-terminus, the 570-residue chain is Glutamate--tRNA ligase (570 aa).

The 'HIGH' region motif lies at 105 to 115 (PNPDGAFHLGN).

This sequence belongs to the class-I aminoacyl-tRNA synthetase family. Glutamate--tRNA ligase type 2 subfamily.

The protein localises to the cytoplasm. The catalysed reaction is tRNA(Glu) + L-glutamate + ATP = L-glutamyl-tRNA(Glu) + AMP + diphosphate. In terms of biological role, catalyzes the attachment of glutamate to tRNA(Glu) in a two-step reaction: glutamate is first activated by ATP to form Glu-AMP and then transferred to the acceptor end of tRNA(Glu). The chain is Glutamate--tRNA ligase from Pyrococcus horikoshii (strain ATCC 700860 / DSM 12428 / JCM 9974 / NBRC 100139 / OT-3).